Here is a 349-residue protein sequence, read N- to C-terminus: ATPase GET3 (349 aa).

ATP is bound at residue lysine 27–threonine 34. Aspartate 58 is a catalytic residue. Positions 240 and 267 each coordinate ATP. The Zn(2+) site is built by cysteine 280 and cysteine 283.

The protein belongs to the arsA ATPase family. In terms of assembly, homodimer. Component of the Golgi to ER traffic (GET) complex, which is composed of GET1, GET2 and GET3. Within the complex, GET1 and GET2 form a heterotetramer which is stabilized by phosphatidylinositol binding and which binds to the GET3 homodimer. Interacts with the chloride channel protein GEF1.

The protein resides in the cytoplasm. Its subcellular location is the endoplasmic reticulum. The protein localises to the golgi apparatus. In terms of biological role, ATPase required for the post-translational delivery of tail-anchored (TA) proteins to the endoplasmic reticulum. Recognizes and selectively binds the transmembrane domain of TA proteins in the cytosol. This complex then targets to the endoplasmic reticulum by membrane-bound receptors GET1 and GET2, where the tail-anchored protein is released for insertion. This process is regulated by ATP binding and hydrolysis. ATP binding drives the homodimer towards the closed dimer state, facilitating recognition of newly synthesized TA membrane proteins. ATP hydrolysis is required for insertion. Subsequently, the homodimer reverts towards the open dimer state, lowering its affinity for the GET1-GET2 receptor, and returning it to the cytosol to initiate a new round of targeting. Cooperates with the HDEL receptor ERD2 to mediate the ATP-dependent retrieval of resident ER proteins that contain a C-terminal H-D-E-L retention signal from the Golgi to the ER. Involved in low-level resistance to the oxyanions arsenite and arsenate, and in heat tolerance. In Eremothecium gossypii (strain ATCC 10895 / CBS 109.51 / FGSC 9923 / NRRL Y-1056) (Yeast), this protein is ATPase GET3.